Consider the following 529-residue polypeptide: Fibroblast growth factor receptor-like 1 (529 aa).

The N-terminal stretch at 1 to 20 (MTRSPALLLLLLGALPSAEA) is a signal peptide. Residues 21 to 374 (ARGPPRMADK…SSSSTSLPWP (354 aa)) are Extracellular-facing. 3 consecutive Ig-like C2-type domains span residues 25-111 (PRMA…YTLI), 143-233 (PRFT…YKVD), and 242-350 (PVLT…AFLT). Cysteine 47 and cysteine 95 are joined by a disulfide. Asparagine 107 carries N-linked (GlcNAc...) asparagine glycosylation. Residues 116–151 (ISPGKESPGPGGSSGGQEDPASQQWARPRFTQPSKM) are disordered. An intrachain disulfide couples cysteine 168 to cysteine 217. Asparagine 227, asparagine 251, and asparagine 289 each carry an N-linked (GlcNAc...) asparagine glycan. A disulfide bond links cysteine 264 and cysteine 334. The chain crosses the membrane as a helical span at residues 375–395 (VVIGIPAGAVFILGTVLLWLC). Over 396 to 529 (QTKKKPCAPA…RIENNGGRVS (134 aa)) the chain is Cytoplasmic. The interval 405 to 427 (ASTLPVPGHRPPGTSRERSGDKD) is disordered.

In terms of assembly, interacts with FGF2 with a low affinity. In terms of tissue distribution, highly expressed in the kidney, brain and lung. Weakly expressed in the muscle, thymus, lymph node, stomach, intestine, colon and liver. Expressed in fetal cartilaginous structures like the nasal cartilage, the ribs and the sternum as well as in the cartilaginous rudiments of developing bones such as the vertebrae and the pelvic bone. High expression is found in the muscles of the tongue and the diaphragm.

It localises to the cell membrane. Has a negative effect on cell proliferation. The sequence is that of Fibroblast growth factor receptor-like 1 (Fgfrl1) from Mus musculus (Mouse).